Here is a 476-residue protein sequence, read N- to C-terminus: Cytochrome c oxidase subunit 1 (476 aa).

Residues L19–L39 traverse the membrane as a helical segment. Ca(2+) is bound at residue E42. 8 helical membrane passes run M61–G81, I105–F125, V151–I171, L194–M214, L240–I260, M278–Y298, F310–C330, and L345–G365. H66 is a binding site for Fe(II)-heme a. H246 is a binding site for Cu cation. The 1'-histidyl-3'-tyrosine (His-Tyr) cross-link spans H246 to Y250. Y250 is an O2 binding site. Cu cation-binding residues include H295 and H296. Residues H374 and D375 each contribute to the Mg(2+) site. 2 helical membrane passes run V379–V399 and S415–M435. Residue H382 participates in heme a3 binding. Residue H384 coordinates Fe(II)-heme a. P448 is a binding site for Ca(2+). The helical transmembrane segment at N455–F475 threads the bilayer.

The protein belongs to the heme-copper respiratory oxidase family. Component of the cytochrome c oxidase (complex IV, CIV), a multisubunit enzyme composed of a catalytic core of 3 subunits and several supernumerary subunits. The complex exists as a monomer or a dimer and forms supercomplexes (SCs) in the inner mitochondrial membrane with ubiquinol-cytochrome c oxidoreductase (cytochrome b-c1 complex, complex III, CIII). Requires heme as cofactor. The cofactor is Cu cation.

Its subcellular location is the mitochondrion inner membrane. The catalysed reaction is 4 Fe(II)-[cytochrome c] + O2 + 8 H(+)(in) = 4 Fe(III)-[cytochrome c] + 2 H2O + 4 H(+)(out). Its pathway is energy metabolism; oxidative phosphorylation. In terms of biological role, component of the cytochrome c oxidase, the last enzyme in the mitochondrial electron transport chain which drives oxidative phosphorylation. The respiratory chain contains 3 multisubunit complexes succinate dehydrogenase (complex II, CII), ubiquinol-cytochrome c oxidoreductase (cytochrome b-c1 complex, complex III, CIII) and cytochrome c oxidase (complex IV, CIV), that cooperate to transfer electrons derived from NADH and succinate to molecular oxygen, creating an electrochemical gradient over the inner membrane that drives transmembrane transport and the ATP synthase. Cytochrome c oxidase is the component of the respiratory chain that catalyzes the reduction of oxygen to water. Electrons originating from reduced cytochrome c in the intermembrane space (IMS) are transferred via the dinuclear copper A center (CU(A)) of subunit 2 and heme A of subunit 1 to the active site in subunit 1, a binuclear center (BNC) formed by heme A3 and copper B (CU(B)). The BNC reduces molecular oxygen to 2 water molecules using 4 electrons from cytochrome c in the IMS and 4 protons from the mitochondrial matrix. The sequence is that of Cytochrome c oxidase subunit 1 (MT-CO1) from Plasmodium falciparum.